A 484-amino-acid polypeptide reads, in one-letter code: Ribonuclease Y (484 aa).

A helical transmembrane segment spans residues 18–38 (FFAFLFLIIIAFNLCLFAYLY). The region spanning 166–234 (SPSFLISESD…LTVRNILMND (69 aa)) is the KH domain. In terms of domain architecture, HD spans 293 to 385 (VLSHSLETAF…TQIADKLSAA (93 aa)).

This sequence belongs to the RNase Y family.

It localises to the cell membrane. Its function is as follows. Endoribonuclease that initiates mRNA decay. The protein is Ribonuclease Y of Mycoplasma genitalium (strain ATCC 33530 / DSM 19775 / NCTC 10195 / G37) (Mycoplasmoides genitalium).